The sequence spans 397 residues: Aromatic-amino-acid aminotransferase (397 aa).

4 residues coordinate substrate: G34, Y66, W131, and N184. K247 carries the N6-(pyridoxal phosphate)lysine modification. Substrate-binding residues include R281 and R375.

It belongs to the class-I pyridoxal-phosphate-dependent aminotransferase family. As to quaternary structure, homodimer. The cofactor is pyridoxal 5'-phosphate.

It localises to the cytoplasm. It carries out the reaction an aromatic L-alpha-amino acid + 2-oxoglutarate = an aromatic oxo-acid + L-glutamate. The catalysed reaction is (3S)-3-methyl-L-phenylalanine + 2-oxoglutarate = (3S)-2-oxo-3-phenylbutanoate + L-glutamate. It functions in the pathway amino-acid biosynthesis; L-phenylalanine biosynthesis; L-phenylalanine from phenylpyruvate (ArAT route): step 1/1. The protein operates within amino-acid biosynthesis; L-tyrosine biosynthesis; L-tyrosine from (4-hydroxyphenyl)pyruvate: step 1/1. In terms of biological role, broad-specificity enzyme that catalyzes the transamination of 2-ketoisocaproate, p-hydroxyphenylpyruvate, and phenylpyruvate to yield leucine, tyrosine, and phenylalanine, respectively. In vitro, is able to catalyze the conversion of beta-methyl phenylpyruvate to the nonproteinogenic amino acid (2S,3S)-beta-methyl-phenylalanine, a building block of the antibiotic mannopeptimycin produced by Streptomyces hygroscopicus NRRL3085. This Escherichia coli (strain K12) protein is Aromatic-amino-acid aminotransferase (tyrB).